Consider the following 416-residue polypeptide: MAAPTRSLRRLSSFRTTISPSLTVTAPIGCRSYATTDSSSATNTPGTTRRRATKFQDKLNAGPSFSDFVSGGQDEPLDPSEAYALKTALVGPAGRKKEMTRLPEWLKTPIPDSKNYQRLKKDLRGLNLHTVCEEARCPNISDCWGGSDKSSATATIMLMGDTCTRGCRFCSVKTSRAPPPLDPHEPENTAEAISRWSLGYVVLTSVDRDDLVDGGARHFAETVIKIKQKKPSMLVECLTGDFRGDTEMAALVARSGLDVYAHNVETVEELTPFVRDRRATFQQSIRVLDSAKKAVPELVTKTSLMLGLGETDEQLWDALRQLRAVNVDVVTFGQYMRPTKRHMAVHEYVTPDRFELWRQRALDMGFLYCASGPLVRSSYKAGEAFIENVLKKRRAGSGTAERTVDQTAATTDEATR.

Residues 1-33 (MAAPTRSLRRLSSFRTTISPSLTVTAPIGCRSY) constitute a mitochondrion transit peptide. Residues cysteine 132, cysteine 137, cysteine 143, cysteine 163, cysteine 167, cysteine 170, and serine 378 each coordinate [4Fe-4S] cluster. The Radical SAM core domain occupies 148–367 (DKSSATATIM…RQRALDMGFL (220 aa)). Residues 396–416 (GSGTAERTVDQTAATTDEATR) form a disordered region. Residues 405–416 (DQTAATTDEATR) are compositionally biased toward polar residues.

Belongs to the radical SAM superfamily. Lipoyl synthase family. [4Fe-4S] cluster is required as a cofactor.

The protein resides in the mitochondrion. It carries out the reaction [[Fe-S] cluster scaffold protein carrying a second [4Fe-4S](2+) cluster] + N(6)-octanoyl-L-lysyl-[protein] + 2 oxidized [2Fe-2S]-[ferredoxin] + 2 S-adenosyl-L-methionine + 4 H(+) = [[Fe-S] cluster scaffold protein] + N(6)-[(R)-dihydrolipoyl]-L-lysyl-[protein] + 4 Fe(3+) + 2 hydrogen sulfide + 2 5'-deoxyadenosine + 2 L-methionine + 2 reduced [2Fe-2S]-[ferredoxin]. The protein operates within protein modification; protein lipoylation via endogenous pathway; protein N(6)-(lipoyl)lysine from octanoyl-[acyl-carrier-protein]: step 2/2. Catalyzes the radical-mediated insertion of two sulfur atoms into the C-6 and C-8 positions of the octanoyl moiety bound to the lipoyl domains of lipoate-dependent enzymes, thereby converting the octanoylated domains into lipoylated derivatives. This is Lipoyl synthase, mitochondrial from Penicillium rubens (strain ATCC 28089 / DSM 1075 / NRRL 1951 / Wisconsin 54-1255) (Penicillium chrysogenum).